Reading from the N-terminus, the 357-residue chain is Vomeronasal type-1 receptor 5 (357 aa).

Over 1–3 (MLK) the chain is Extracellular. The chain crosses the membrane as a helical span at residues 4-24 (LVIIENMAEIMLFSLDLLLFS). Residues 25–52 (TDILCFNFPSKMIKLPGFITIQIFFYPQ) are Cytoplasmic-facing. The chain crosses the membrane as a helical span at residues 53-73 (ASFGISANTILFLFHIFTFVF). At 74–81 (SHRSKSID) the chain is on the extracellular side. A helical transmembrane segment spans residues 82-102 (MIISHLSLIHILLLFTQAILV). The Cytoplasmic segment spans residues 103–130 (SLDFFGSQNTQDDLRCKVIVFLNKVMRG). A helical membrane pass occupies residues 131–151 (LSICTPCLLNVLQAIISPSIF). Topologically, residues 152–163 (SLAKLKHPSASH) are extracellular. Residues 164-184 (ILGFFLFSWVLNMFIGVIFCC) form a helical membrane-spanning segment. Topologically, residues 185 to 269 (TLWLPPVKWG…PVSPVKRASQ (85 aa)) are cytoplasmic. A helical transmembrane segment spans residues 270–290 (TILLLVSFVFIYWVDFMFSFS). Topologically, residues 291-300 (RGVTWINDSL) are extracellular. Residue N297 is glycosylated (N-linked (GlcNAc...) asparagine). Residues 301–321 (LVWFQVIVANSYATISPLMLI) traverse the membrane as a helical segment. The Cytoplasmic portion of the chain corresponds to 322–357 (YADNQIFKTLQMLWFKYLSPPKLMLKFNRQCGSTKK).

The protein belongs to the G-protein coupled receptor 1 family.

It is found in the cell membrane. In terms of biological role, putative pheromone receptor. The polypeptide is Vomeronasal type-1 receptor 5 (VN1R5) (Gorilla gorilla gorilla (Western lowland gorilla)).